The sequence spans 72 residues: DNA-directed RNA polymerase subunit omega (72 aa).

This sequence belongs to the RNA polymerase subunit omega family. As to quaternary structure, the RNAP catalytic core consists of 2 alpha, 1 beta, 1 beta' and 1 omega subunit. When a sigma factor is associated with the core the holoenzyme is formed, which can initiate transcription.

It catalyses the reaction RNA(n) + a ribonucleoside 5'-triphosphate = RNA(n+1) + diphosphate. Promotes RNA polymerase assembly. Latches the N- and C-terminal regions of the beta' subunit thereby facilitating its interaction with the beta and alpha subunits. This chain is DNA-directed RNA polymerase subunit omega, found in Clostridium beijerinckii (strain ATCC 51743 / NCIMB 8052) (Clostridium acetobutylicum).